The chain runs to 410 residues: Structure-specific endonuclease subunit SLX1 homolog (410 aa).

The 84-residue stretch at 6 to 89 (QLHYCYFLLS…NICKVTRDNI (84 aa)) folds into the GIY-YIG domain.

Belongs to the SLX1 family. In terms of assembly, forms a heterodimer with a member of the SLX4 family. A divalent metal cation is required as a cofactor.

The protein resides in the nucleus. Functionally, catalytic subunit of a heterodimeric structure-specific endonuclease that resolves DNA secondary structures generated during DNA repair and recombination. Has endonuclease activity towards branched DNA substrates, introducing single-strand cuts in duplex DNA close to junctions with ss-DNA. In Cryptosporidium parvum (strain Iowa II), this protein is Structure-specific endonuclease subunit SLX1 homolog.